Here is a 249-residue protein sequence, read N- to C-terminus: ATP synthase subunit a 1 (249 aa).

The next 6 helical transmembrane spans lie at 26-46, 84-104, 114-134, 143-163, 193-213, and 216-236; these read FTNV…FLYL, FFPF…LGLF, IIVT…YGFF, LFVP…IEII, FVVS…LPLI, and VAIT…FTVL.

The protein belongs to the ATPase A chain family. In terms of assembly, F-type ATPases have 2 components, CF(1) - the catalytic core - and CF(0) - the membrane proton channel. CF(1) has five subunits: alpha(3), beta(3), gamma(1), delta(1), epsilon(1). CF(0) has three main subunits: a(1), b(2) and c(9-12). The alpha and beta chains form an alternating ring which encloses part of the gamma chain. CF(1) is attached to CF(0) by a central stalk formed by the gamma and epsilon chains, while a peripheral stalk is formed by the delta and b chains.

It localises to the cell inner membrane. Its function is as follows. Key component of the proton channel; it plays a direct role in the translocation of protons across the membrane. This chain is ATP synthase subunit a 1, found in Brucella anthropi (strain ATCC 49188 / DSM 6882 / CCUG 24695 / JCM 21032 / LMG 3331 / NBRC 15819 / NCTC 12168 / Alc 37) (Ochrobactrum anthropi).